The chain runs to 147 residues: uncharacterized protein (147 aa).

Positions 51–72 are disordered; it reads VTSSMSVMNDSEECPLINGPSM.

This is an uncharacterized protein from Gallid herpesvirus 2 (strain GA) (GaHV-2).